The sequence spans 400 residues: Nicotinate phosphoribosyltransferase (400 aa).

Residue histidine 220 is modified to Phosphohistidine; by autocatalysis.

Belongs to the NAPRTase family. Transiently phosphorylated on a His residue during the reaction cycle. Phosphorylation strongly increases the affinity for substrates and increases the rate of nicotinate D-ribonucleotide production. Dephosphorylation regenerates the low-affinity form of the enzyme, leading to product release.

It carries out the reaction nicotinate + 5-phospho-alpha-D-ribose 1-diphosphate + ATP + H2O = nicotinate beta-D-ribonucleotide + ADP + phosphate + diphosphate. It functions in the pathway cofactor biosynthesis; NAD(+) biosynthesis; nicotinate D-ribonucleotide from nicotinate: step 1/1. Its function is as follows. Catalyzes the synthesis of beta-nicotinate D-ribonucleotide from nicotinate and 5-phospho-D-ribose 1-phosphate at the expense of ATP. In Salmonella agona (strain SL483), this protein is Nicotinate phosphoribosyltransferase.